We begin with the raw amino-acid sequence, 2403 residues long: Highly reducing polyketide synthase fogA (2403 aa).

In terms of domain architecture, Ketosynthase family 3 (KS3) spans 3–428 (DDPPCIVGMA…GANAHVILES (426 aa)). Residues Cys176, His311, and His350 each act as for beta-ketoacyl synthase activity in the active site. Residues 538–858 (VFTGQGAQYA…PYAPSLVRKE (321 aa)) are malonyl-CoA:ACP transacylase (MAT) domain. Ser632 (for malonyltransferase activity) is an active-site residue. The interval 929 to 1068 (HELLGTFALT…GSIRVVEPLT (140 aa)) is N-terminal hotdog fold. The dehydratase (DH) domain stretch occupies residues 929–1238 (HELLGTFALT…DARMSLYTGK (310 aa)). The PKS/mFAS DH domain maps to 929-1241 (HELLGTFALT…MSLYTGKSSA (313 aa)). His961 serves as the catalytic Proton acceptor; for dehydratase activity. Residues 1084 to 1241 (SFEASPTNRW…MSLYTGKSSA (158 aa)) are C-terminal hotdog fold. Residue Asp1152 is the Proton donor; for dehydratase activity of the active site. An enoyl reductase (ER) domain region spans residues 1663–1981 (GATDSMFFQQ…QQDRIGKIVI (319 aa)). Residues 2006–2185 (VYLLIGCLGG…AVAVGLGMIS (180 aa)) form a ketoreductase (KR) domain region. The segment at 2280-2300 (AQNSTSSSGSNSNTPTTAAPW) is disordered. Positions 2282-2296 (NSTSSSGSNSNTPTT) are enriched in low complexity. Residues 2320–2398 (SLNAAILRLI…GLAVVVEGKL (79 aa)) enclose the Carrier domain. Ser2357 is subject to O-(pantetheine 4'-phosphoryl)serine.

Requires pantetheine 4'-phosphate as cofactor.

It participates in secondary metabolite biosynthesis. Highly reducing polyketide synthase; part of the gene cluster that mediates the biosynthesis of flavoglaucin and congeners (including aspergin, dihydroauroglaucin and auroglaucin), prenylated salicylaldehyde derivatives carrying a saturated or an unsaturated C-7 side chain. FogA releases the carboxylic acid (8E,10E,12E)-3,5,7-trihydroxytetradeca-8,10,12-trienoic acid as its product, as well as derivatives with one and two double bonds. FogA is indeed able to reduce the initial triketide, thus being at least partially responsible for the differently saturated heptyl side chains of flavoglaucin congeners. The oxidoreductases fogB, fogC and fogD modify the nascent polyketide in fogA-bound form and, together, fogA, fogB, fogC and fogD are necessary for the formation of the aromatic core and the cyclized PKS products are released as salicyl alcohols. In particular, fogB is responsible for oxidation of a hydroxyl group or reduction of remaining double bond(s) at the C-7 residue whereas fogD is probably involved in the reductive release of the modified PKS products. The cytochrome P450 monooxygenase fogE is then responsible for the hydroxylation at C-3 of the benzene ring. The fogE products are substrates of the prenyltransferase fogH and the prenylated benzyl alcohols are subsequently oxidized by the fogF to produce the final aryl aldehydes flavoglaucin and congeners. The short-chain dehydrogenase fogG does not seem to be involved in the biosynthesis of the prenylated salicylaldehyde derivatives. The chain is Highly reducing polyketide synthase fogA from Aspergillus ruber (strain CBS 135680).